Here is a 348-residue protein sequence, read N- to C-terminus: Protein RecA (348 aa).

69–76 lines the ATP pocket; sequence GPESSGKT.

Belongs to the RecA family.

It localises to the cytoplasm. Its function is as follows. Can catalyze the hydrolysis of ATP in the presence of single-stranded DNA, the ATP-dependent uptake of single-stranded DNA by duplex DNA, and the ATP-dependent hybridization of homologous single-stranded DNAs. It interacts with LexA causing its activation and leading to its autocatalytic cleavage. This Picosynechococcus sp. (strain ATCC 27264 / PCC 7002 / PR-6) (Agmenellum quadruplicatum) protein is Protein RecA.